A 281-amino-acid chain; its full sequence is ATP synthase gamma chain (281 aa).

It belongs to the ATPase gamma chain family. F-type ATPases have 2 components, CF(1) - the catalytic core - and CF(0) - the membrane proton channel. CF(1) has five subunits: alpha(3), beta(3), gamma(1), delta(1), epsilon(1). CF(0) has three main subunits: a, b and c.

It is found in the cell membrane. In terms of biological role, produces ATP from ADP in the presence of a proton gradient across the membrane. The gamma chain is believed to be important in regulating ATPase activity and the flow of protons through the CF(0) complex. This Clostridium pasteurianum protein is ATP synthase gamma chain.